Here is a 253-residue protein sequence, read N- to C-terminus: MLKFVILLSAVACALGGTVPEGLLPQLDGRIVGGSATTISSFPWQISLQRSGSHSCGGSIYSSNVIVTAAHCLQSVSASVLQIRAGSSYWSSGGVTFSVSSFKNHEGYNANTMVNDIAIIKINGALTFSSTIKAIGLASSNPANGAAASVSGWGTLSYGSSSIPSQLQYVNVNIVSQSQCASSTYGYGSQIRSTMICAAASGKDACQGDSGGPLVSGGVLVGVVSWGYGCAYSNYPGVYADVAALRSWVISNA.

Residues methionine 1 to glycine 22 form the signal peptide. The propeptide at leucine 23 to arginine 30 is activation peptide. Positions isoleucine 31–alanine 253 constitute a Peptidase S1 domain. Residues cysteine 56 and cysteine 72 are joined by a disulfide bond. Catalysis depends on charge relay system residues histidine 71 and aspartate 116. Disulfide bonds link cysteine 180-cysteine 197 and cysteine 206-cysteine 230. Serine 210 functions as the Charge relay system in the catalytic mechanism.

The protein belongs to the peptidase S1 family.

The protein resides in the secreted. It localises to the extracellular space. It carries out the reaction Preferential cleavage: Arg-|-Xaa, Lys-|-Xaa.. In Drosophila melanogaster (Fruit fly), this protein is Trypsin delta.